We begin with the raw amino-acid sequence, 625 residues long: Threonine--tRNA ligase (625 aa).

An editing domain region spans residues 1-147; the sequence is MRMLLIHSDY…TIVPEEAKVE (147 aa). Residues 206-505 form a catalytic region; sequence PHVRLMLEHE…MQEGKKPMFP (300 aa). 3 residues coordinate Zn(2+): cysteine 298, histidine 350, and histidine 474.

It belongs to the class-II aminoacyl-tRNA synthetase family. In terms of assembly, homodimer. Requires Zn(2+) as cofactor.

The protein resides in the cytoplasm. The catalysed reaction is tRNA(Thr) + L-threonine + ATP = L-threonyl-tRNA(Thr) + AMP + diphosphate + H(+). Functionally, catalyzes the attachment of threonine to tRNA(Thr) in a two-step reaction: L-threonine is first activated by ATP to form Thr-AMP and then transferred to the acceptor end of tRNA(Thr). Also edits incorrectly charged L-seryl-tRNA(Thr). The polypeptide is Threonine--tRNA ligase (Pyrococcus furiosus (strain ATCC 43587 / DSM 3638 / JCM 8422 / Vc1)).